The sequence spans 386 residues: Probable pectin lyase E (386 aa).

Residues 1 to 16 (MKTAVLSLFLALQTYA) form the signal peptide. Cys-77 and Cys-101 are joined by a disulfide. An N-linked (GlcNAc...) asparagine glycan is attached at Asn-124. Residue Arg-251 is part of the active site. Cys-326 and Cys-334 are disulfide-bonded.

The protein belongs to the polysaccharide lyase 1 family.

It localises to the secreted. It catalyses the reaction Eliminative cleavage of (1-&gt;4)-alpha-D-galacturonan methyl ester to give oligosaccharides with 4-deoxy-6-O-methyl-alpha-D-galact-4-enuronosyl groups at their non-reducing ends.. Its function is as follows. Pectinolytic enzymes consist of four classes of enzymes: pectin lyase, polygalacturonase, pectin methylesterase and rhamnogalacturonase. Among pectinolytic enzymes, pectin lyase is the most important in depolymerization of pectin, since it cleaves internal glycosidic bonds of highly methylated pectins. This Aspergillus fumigatus (strain CBS 144.89 / FGSC A1163 / CEA10) (Neosartorya fumigata) protein is Probable pectin lyase E (pelE).